The primary structure comprises 843 residues: Protein P (843 aa).

Positions 1–177 are terminal protein domain (TP); that stretch reads MPLSYPHFRK…FCGSPYSWEQ (177 aa). Residues 178–346 are spacer; the sequence is ELQHGSTSLN…YCLSHIINLL (169 aa). The segment at 284–308 is disordered; the sequence is EANPSLSTSKRHTSTGNAVELNPVP. A polymerase/reverse transcriptase domain (RT) region spans residues 347–690; that stretch reads EDWGPCYEHG…YMNLYPVARQ (344 aa). Residues 357–600 form the Reverse transcriptase domain; the sequence is QHHIRTPRTP…YNLHFMGYVI (244 aa). The Mg(2+) site is built by Asp-429, Asp-551, and Asp-552.

Belongs to the hepadnaviridae P protein family.

The enzyme catalyses DNA(n) + a 2'-deoxyribonucleoside 5'-triphosphate = DNA(n+1) + diphosphate. It catalyses the reaction Endonucleolytic cleavage to 5'-phosphomonoester.. Activated by host HSP70 and HSP40 in vitro to be able to bind the epsilon loop of the pgRNA. Because deletion of the RNase H region renders the protein partly chaperone-independent, the chaperones may be needed indirectly to relieve occlusion of the RNA-binding site by this domain. Inhibited by several reverse-transcriptase inhibitors: Lamivudine, Adefovir and Entecavir. Its function is as follows. Multifunctional enzyme that converts the viral RNA genome into dsDNA in viral cytoplasmic capsids. This enzyme displays a DNA polymerase activity that can copy either DNA or RNA templates, and a ribonuclease H (RNase H) activity that cleaves the RNA strand of RNA-DNA heteroduplexes in a partially processive 3'- to 5'-endonucleasic mode. Neo-synthesized pregenomic RNA (pgRNA) are encapsidated together with the P protein, and reverse-transcribed inside the nucleocapsid. Initiation of reverse-transcription occurs first by binding the epsilon loop on the pgRNA genome, and is initiated by protein priming, thereby the 5'-end of (-)DNA is covalently linked to P protein. Partial (+)DNA is synthesized from the (-)DNA template and generates the relaxed circular DNA (RC-DNA) genome. After budding and infection, the RC-DNA migrates in the nucleus, and is converted into a plasmid-like covalently closed circular DNA (cccDNA). The activity of P protein does not seem to be necessary for cccDNA generation, and is presumably released from (+)DNA by host nuclear DNA repair machinery. This chain is Protein P, found in Homo sapiens (Human).